The sequence spans 628 residues: Kinesin-like protein tea2 (628 aa).

The tract at residues 2–122 (SSSSSKPVNT…TTSQQTNSKG (121 aa)) is interaction with mal3. Ser-82 carries the phosphoserine modification. In terms of domain architecture, Kinesin motor spans 132–460 (GIITSIRIRP…LKFASRAQNL (329 aa)). 218–225 (GMTGTGKT) contacts ATP. Residues 530 to 557 (LRMEELLSDHNFEIADLRDELQDKEQII) adopt a coiled-coil conformation. The disordered stretch occupies residues 588–628 (VTRGSRSSSDQFSNETKTEILPDDQQQSKKDSVTQETQLLS). The span at 589 to 602 (TRGSRSSSDQFSNE) shows a compositional bias: polar residues. Residues 603 to 620 (TKTEILPDDQQQSKKDSV) are compositionally biased toward basic and acidic residues.

This sequence belongs to the TRAFAC class myosin-kinesin ATPase superfamily. Kinesin family. Interacts with mal3 and tip1.

Its subcellular location is the cytoplasm. It localises to the cytoskeleton. Functionally, promotes microtubule growth, possibly through interactions with the microtubule end, and is important for establishing and maintaining polarized growth along the long axis of the cell. Acts as a kinesin motor protein that moves along microtubules and is required for proper localization of tea1 and tip1 to the cell tips and microtubules, respectively. ATPase activity stimulated via interaction with mal3. This is Kinesin-like protein tea2 from Schizosaccharomyces pombe (strain 972 / ATCC 24843) (Fission yeast).